A 146-amino-acid polypeptide reads, in one-letter code: Snaclec CTL-Eoc124 (146 aa).

Positions 1 to 23 (MGRFISVSFGLLVVFLSLSGTGA) are cleaved as a signal peptide. Disulfide bonds link Cys25–Cys36, Cys53–Cys142, and Cys119–Cys134. Residues 32-143 (YQGHCYRVFN…CSRTNNVACK (112 aa)) form the C-type lectin domain.

The protein belongs to the snaclec family. As to quaternary structure, heterodimer; disulfide-linked. Expressed by the venom gland.

It is found in the secreted. Functionally, interferes with one step of hemostasis (modulation of platelet aggregation, or coagulation cascade, for example). In Echis ocellatus (Ocellated saw-scaled viper), this protein is Snaclec CTL-Eoc124.